The sequence spans 780 residues: ATP-dependent 6-phosphofructokinase, liver type (780 aa).

The residue at position 2 (Ala-2) is an N-acetylalanine. The N-terminal catalytic PFK domain 1 stretch occupies residues Ala-2 to His-390. Residues Gly-25, Arg-88–Cys-89, and Gly-118–Ser-121 each bind ATP. Mg(2+) is bound at residue Asp-119. Residues Ser-164–Asp-166, Arg-201, Met-208–Arg-210, Glu-264, Arg-292, and His-298–Arg-301 contribute to the substrate site. Asp-166 (proton acceptor) is an active-site residue. Position 377 is a phosphoserine (Ser-377). Residues Gln-391–Phe-400 form an interdomain linker region. The interval Ser-401 to Phe-780 is C-terminal regulatory PFK domain 2. Residues Arg-470, Thr-527–Asn-531, Arg-565, Met-572–Gly-574, and Glu-628 each bind beta-D-fructose 2,6-bisphosphate. Ser-529 carries O-linked (GlcNAc) serine glycosylation. Tyr-640 bears the Phosphotyrosine mark. Residues Arg-654, His-660–Gln-663, and Arg-734 contribute to the beta-D-fructose 2,6-bisphosphate site. Ser-775 bears the Phosphoserine mark.

It belongs to the phosphofructokinase type A (PFKA) family. ATP-dependent PFK group I subfamily. Eukaryotic two domain clade 'E' sub-subfamily. Homo- and heterotetramers. Phosphofructokinase (PFK) enzyme functions as a tetramer composed of different combinations of 3 types of subunits, called PFKM (M), PFKL (L) and PFKP (P). The composition of the PFK tetramer differs according to the tissue type it is present in. The kinetic and regulatory properties of the tetrameric enzyme are dependent on the subunit composition, hence can vary across tissues. Mg(2+) is required as a cofactor. Post-translationally, glcNAcylation at Ser-529 by OGT decreases enzyme activity, leading to redirect glucose flux through the oxidative pentose phosphate pathway. Glycosylation is stimulated by both hypoxia and glucose deprivation.

The protein localises to the cytoplasm. It carries out the reaction beta-D-fructose 6-phosphate + ATP = beta-D-fructose 1,6-bisphosphate + ADP + H(+). It functions in the pathway carbohydrate degradation; glycolysis; D-glyceraldehyde 3-phosphate and glycerone phosphate from D-glucose: step 3/4. Its activity is regulated as follows. Allosterically activated by ADP, AMP, or fructose 2,6-bisphosphate, and allosterically inhibited by ATP or citrate. GlcNAcylation by OGT overcomes allosteric regulation. Its function is as follows. Catalyzes the phosphorylation of D-fructose 6-phosphate to fructose 1,6-bisphosphate by ATP, the first committing step of glycolysis. Negatively regulates the phagocyte oxidative burst in response to bacterial infection by controlling cellular NADPH biosynthesis and NADPH oxidase-derived reactive oxygen species. Upon macrophage activation, drives the metabolic switch toward glycolysis, thus preventing glucose turnover that produces NADPH via pentose phosphate pathway. The protein is ATP-dependent 6-phosphofructokinase, liver type of Mus musculus (Mouse).